The primary structure comprises 862 residues: AP-1 complex subunit gamma-2 (862 aa).

HEAT repeat units lie at residues 1–28, 29–65, 101–136, 137–173, 308–345, 346–382, 384–417, 418–454, 458–496, 507–545, and 560–599; these read MNPF…EERA, VVRK…LGYP, EVLM…CSAE, MARD…KVPD, GLRV…VDSQ, AVQR…ENNV, PLAK…KFAP, EKIW…NAPD, YTVR…NNAG, TESD…RFPS, and SFVL…ATFS. One can recognise a GAE domain in the interval 744-859; sequence AAYPSIVAFE…LEEGQINNFP (116 aa).

It belongs to the adaptor complexes large subunit family. As to quaternary structure, adaptor protein complex 1 (AP-1) is a heterotetramer composed of two large adaptins (gamma-type subunit and beta-type subunit), a medium adaptin (mu-type subunit) and a small adaptin (sigma-type subunit).

The protein resides in the golgi apparatus. The protein localises to the cytoplasmic vesicle. It is found in the clathrin-coated vesicle membrane. Functionally, subunit of clathrin-associated adaptor protein complex 1 that plays a role in protein sorting at the trans-Golgi network and early endosomes (TGN/EE). The AP complexes mediate both the recruitment of clathrin to membranes and the recognition of sorting signals within the cytosolic tails of transmembrane cargo molecules. The protein is AP-1 complex subunit gamma-2 of Arabidopsis thaliana (Mouse-ear cress).